We begin with the raw amino-acid sequence, 210 residues long: Probable peroxygenase 7 (210 aa).

Residues 1 to 24 (MSHQTVALASKAKSPKPKRGKLDK) form a disordered region. Residues 25–60 (EKMTALEKHVSFFDRNKDGTVYPWETYQGFRALGTG) enclose the EF-hand domain. His-33 is a heme binding site. 5 residues coordinate Ca(2+): Asp-38, Asn-40, Asp-42, Thr-44, and Glu-49. The Proline-knot motif lies at 81–90 (PGKGFSPLFP). Position 188 is a phosphoserine (Ser-188).

Belongs to the caleosin family. In terms of assembly, homodimer. The cofactor is heme b. Ca(2+) is required as a cofactor. Expressed in pollen coat.

The protein localises to the secreted. It catalyses the reaction RH + ROOH = ROH + ROH.. Probable calcium-binding peroxygenase. May be involved in pollination. This Arabidopsis thaliana (Mouse-ear cress) protein is Probable peroxygenase 7 (PXG7).